The following is a 1138-amino-acid chain: Pesticidal crystal protein Cry7Ab (1138 aa).

It belongs to the delta endotoxin family.

Promotes colloidosmotic lysis by binding to the midgut epithelial cells of Coleoptera. This Bacillus thuringiensis serovar kumamotoensis protein is Pesticidal crystal protein Cry7Ab (cry7Ab).